A 537-amino-acid polypeptide reads, in one-letter code: Polyadenylate-binding protein 6 (537 aa).

4 consecutive RRM domains span residues 21 to 99 (GSLY…WSQR), 112 to 188 (ANLY…KFIN), 202 to 279 (TNVY…KALK), and 304 to 381 (SNLY…VAER). The interval 503 to 537 (KATTSEENRKEERRLTLSGKLSPEVKVEESGKQLQ) is disordered. 2 stretches are compositionally biased toward basic and acidic residues: residues 506–517 (TSEENRKEERRL) and 525–537 (PEVKVEESGKQLQ).

This sequence belongs to the polyadenylate-binding protein type-1 family. In terms of tissue distribution, expressed at low levels in leaves and young seedlings.

It localises to the cytoplasm. The protein localises to the nucleus. Its function is as follows. Binds the poly(A) tail of mRNA. Appears to be an important mediator of the multiple roles of the poly(A) tail in mRNA biogenesis, stability and translation. In Arabidopsis thaliana (Mouse-ear cress), this protein is Polyadenylate-binding protein 6 (PAB6).